The sequence spans 94 residues: Large ribosomal subunit protein uL23 (94 aa).

This sequence belongs to the universal ribosomal protein uL23 family. In terms of assembly, part of the 50S ribosomal subunit. Contacts protein L29, and trigger factor when it is bound to the ribosome.

Its function is as follows. One of the early assembly proteins it binds 23S rRNA. One of the proteins that surrounds the polypeptide exit tunnel on the outside of the ribosome. Forms the main docking site for trigger factor binding to the ribosome. This is Large ribosomal subunit protein uL23 from Lysinibacillus sphaericus (strain C3-41).